The primary structure comprises 259 residues: Probable dihydroorotate dehydrogenase B (NAD(+)), electron transfer subunit (259 aa).

Residues 1-89 (MLPLNATITQ…RGPFGKGFTL (89 aa)) form the FAD-binding FR-type domain. [2Fe-2S] cluster is bound by residues C211, C216, C219, and C229.

It belongs to the PyrK family. As to quaternary structure, heterotetramer of 2 PyrK and 2 PyrD type B subunits. [2Fe-2S] cluster is required as a cofactor. FAD serves as cofactor.

The protein operates within pyrimidine metabolism; UMP biosynthesis via de novo pathway; orotate from (S)-dihydroorotate (NAD(+) route): step 1/1. Functionally, responsible for channeling the electrons from the oxidation of dihydroorotate from the FMN redox center in the PyrD type B subunit to the ultimate electron acceptor NAD(+). This is Probable dihydroorotate dehydrogenase B (NAD(+)), electron transfer subunit from Methanosarcina mazei (strain ATCC BAA-159 / DSM 3647 / Goe1 / Go1 / JCM 11833 / OCM 88) (Methanosarcina frisia).